Here is an 80-residue protein sequence, read N- to C-terminus: Acyl carrier protein (80 aa).

In terms of domain architecture, Carrier spans Glu-4 to Gln-79. At Ser-39 the chain carries O-(pantetheine 4'-phosphoryl)serine.

This sequence belongs to the acyl carrier protein (ACP) family. 4'-phosphopantetheine is transferred from CoA to a specific serine of apo-ACP by AcpS. This modification is essential for activity because fatty acids are bound in thioester linkage to the sulfhydryl of the prosthetic group.

The protein localises to the cytoplasm. It participates in lipid metabolism; fatty acid biosynthesis. Carrier of the growing fatty acid chain in fatty acid biosynthesis. This is Acyl carrier protein from Prochlorococcus marinus (strain MIT 9313).